The primary structure comprises 539 residues: Chaperone Ric-8A (539 aa).

Residues 506 to 539 (PMGVTSDGRLGPLDEAAQKMLQRQESSDLDSDSD) are disordered.

The protein belongs to the synembryn family.

The protein localises to the cytoplasm. The protein resides in the cell cortex. Its function is as follows. Chaperone that specifically binds and folds nascent G alpha proteins prior to G protein heterotrimer formation, promoting their stability and activity: folds GNAI1, GNAO1, GNA13 and GNAQ. Does not fold G(s) G-alpha proteins GNAS nor GNAL. Also acts as a guanine nucleotide exchange factor (GEF) for G alpha proteins by stimulating exchange of bound GDP for free GTP. This chain is Chaperone Ric-8A (ric8a), found in Xenopus laevis (African clawed frog).